A 379-amino-acid polypeptide reads, in one-letter code: Homoserine O-acetyltransferase (379 aa).

One can recognise an AB hydrolase-1 domain in the interval 54-332 (NAILVCHALS…PYQSEEIVKS (279 aa)). The active-site Nucleophile is the S159. Substrate is bound at residue R228. Active-site residues include D318 and H352. Substrate is bound at residue D353.

Belongs to the AB hydrolase superfamily. MetX family. As to quaternary structure, homodimer.

The protein localises to the cytoplasm. The enzyme catalyses L-homoserine + acetyl-CoA = O-acetyl-L-homoserine + CoA. It functions in the pathway amino-acid biosynthesis; L-methionine biosynthesis via de novo pathway; O-acetyl-L-homoserine from L-homoserine: step 1/1. Transfers an acetyl group from acetyl-CoA to L-homoserine, forming acetyl-L-homoserine. In Leptospira meyeri, this protein is Homoserine O-acetyltransferase.